A 527-amino-acid polypeptide reads, in one-letter code: Protein PyrBI (527 aa).

The aspartate carbamoyltransferase stretch occupies residues 1-342; sequence MKRDFLGRTL…MFGGALEAPF (342 aa). The tract at residues 343-357 is linker; sequence DTSKKEEKPEEDFII. The tract at residues 368–527 is aspartate carbamoyltransferase regulatory region; that stretch reads VQKEGKRGIK…PHSFEEIWSI (160 aa). The Zn(2+) site is built by C483, C488, C512, and C515.

The protein in the N-terminal section; belongs to the aspartate/ornithine carbamoyltransferase superfamily. ATCase family. This sequence in the C-terminal section; belongs to the PyrI family.

It carries out the reaction carbamoyl phosphate + L-aspartate = N-carbamoyl-L-aspartate + phosphate + H(+). It participates in pyrimidine metabolism; UMP biosynthesis via de novo pathway; (S)-dihydroorotate from bicarbonate: step 2/3. This is Protein PyrBI (pyrBI) from Thermotoga maritima (strain ATCC 43589 / DSM 3109 / JCM 10099 / NBRC 100826 / MSB8).